A 332-amino-acid chain; its full sequence is MACPRPLSQCDHTPLPGPPAGHWPLPLSRRRREMKSNKEQRSAVFVILFALITILILYSSSSANEVFHYGSLRGRTRRPVNLRKWSITDGYIPILGNKTLPSRCGQCVIVTSSSHLLGTKLGPEIERAECTIRMNDAPTTGYSADVGNKTTFRVVAHSSVFHVLRRPQEFVNRTPETVFIFWGPPNKMQKPQGSLVRVIQRAGLVFPNMEAYAISLSRMRQFDDLFRSETGKDREKSHSWLSTGWFTMVIAVELCDHVHVYGMVPPDYCSLRPHLQRMPYHYYEPKGPDECVTYIQNENSRKGNHHRFITEKRVFSSWAQLYGITFSHPSWT.

A disordered region spans residues 1 to 26; sequence MACPRPLSQCDHTPLPGPPAGHWPLP. Residues 1–42 are Cytoplasmic-facing; sequence MACPRPLSQCDHTPLPGPPAGHWPLPLSRRRREMKSNKEQRS. Residues 43–63 form a helical; Signal-anchor for type II membrane protein membrane-spanning segment; the sequence is AVFVILFALITILILYSSSSA. The Lumenal portion of the chain corresponds to 64-332; it reads NEVFHYGSLR…GITFSHPSWT (269 aa). Asparagine 97 carries N-linked (GlcNAc...) asparagine glycosylation. Cysteine 107 and cysteine 255 are joined by a disulfide.

It belongs to the glycosyltransferase 29 family.

Its subcellular location is the golgi apparatus membrane. The catalysed reaction is a ganglioside GM1b (d18:1(4E)) + CMP-N-acetyl-beta-neuraminate = a ganglioside GD1alpha (d18:1(4E)) + CMP + H(+). It catalyses the reaction N-acetyl-alpha-neuraminosyl-(2-&gt;3)-beta-D-galactosyl-(1-&gt;3)-N-acetyl-beta-D-glucosaminyl-(1-&gt;3)-beta-D-galactosyl-(1-&gt;4)-beta-D-glucosyl-(1&lt;-&gt;1')-N-acyl-sphing-4-enine + CMP-N-acetyl-beta-neuraminate = N-acetyl-alpha-neuraminosyl-(2-&gt;3)-beta-D-galactosyl-(1-&gt;3)-[N-acetyl-alpha-neuraminosyl-(2-&gt;6)]-N-acetyl-beta-D-glucosaminyl-(1-&gt;3)-beta-D-galactosyl-(1-&gt;4)-beta-D-glucosyl-(1&lt;-&gt;1')-N-acyl-sphing-4-enine + CMP + H(+). The enzyme catalyses a globoside MSGG + CMP-N-acetyl-beta-neuraminate = a globoside DSGG + CMP + H(+). It carries out the reaction a ganglioside GD1a (d18:1(4E)) + CMP-N-acetyl-beta-neuraminate = a ganglioside GT1aalpha (d18:1(4E)) + CMP + H(+). The catalysed reaction is a ganglioside GT1b (d18:1(4E)) + CMP-N-acetyl-beta-neuraminate = a ganglioside GQ1balpha (d18:1(4E)) + CMP + H(+). It catalyses the reaction 3-O-[alpha-Neu5Ac-(2-&gt;3)-beta-D-Gal-(1-&gt;3)-alpha-D-GalNAc]-L-Ser-[protein] + CMP-N-acetyl-beta-neuraminate = a 3-O-{alpha-Neu5Ac-(2-&gt;3)-beta-D-Gal-(1-&gt;3)-[alpha-Neu5Ac-(2-&gt;6)]-alpha-D-GalNAc}-L-seryl-[protein] + CMP + H(+). The enzyme catalyses 3-O-[alpha-Neu5Ac-(2-&gt;3)-beta-D-Gal-(1-&gt;3)-alpha-D-GalNAc]-L-Thr-[protein] + CMP-N-acetyl-beta-neuraminate = a 3-O-{alpha-Neu5Ac-(2-&gt;3)-beta-D-Gal-(1-&gt;3)-[alpha-Neu5Ac-(2-&gt;6)]-alpha-D-GalNAc}-L-threonyl-[protein] + CMP + H(+). Its function is as follows. Transfers the sialyl group (N-acetyl-alpha-neuraminyl or NeuAc) from CMP-NeuAc onto glycoproteins and glycolipids, forming an alpha-2,6-linkage. Produces branched type disialyl structures by transfer of a sialyl group onto the GalNAc or GlcNAc residue inside backbone core chains having a terminal sialic acid with an alpha-2,3-linkage on Gal. ST6GalNAcVI prefers glycolipids to glycoproteins, predominantly catalyzing the biosynthesis of ganglioside GD1alpha from GM1b. Besides GMb1, MSGG and other glycolipids, it shows activity towards sialyl Lc4Cer generating disialyl Lc4Cer, which can lead to the synthesis of disialyl Lewis a (Le(a)), suggested to be a cancer-associated antigen. Also has activity toward GD1a and GT1b, and can generate DSGG (disialylgalactosylgloboside) from MSGG (monosialylgalactosylgloboside). In Bos taurus (Bovine), this protein is Alpha-N-acetylgalactosaminide alpha-2,6-sialyltransferase 6 (ST6GALNAC6).